The chain runs to 532 residues: 2,3-bisphosphoglycerate-independent phosphoglycerate mutase (532 aa).

Positions 15 and 65 each coordinate Mn(2+). Ser-65 functions as the Phosphoserine intermediate in the catalytic mechanism. Residues His-126, 156–157 (RD), Arg-188, Arg-194, 258–261 (RPDR), and Lys-331 each bind substrate. The Mn(2+) site is built by Asp-398, His-402, Asp-439, His-440, and His-457.

It belongs to the BPG-independent phosphoglycerate mutase family. In terms of assembly, monomer. Mn(2+) is required as a cofactor.

It carries out the reaction (2R)-2-phosphoglycerate = (2R)-3-phosphoglycerate. The protein operates within carbohydrate degradation; glycolysis; pyruvate from D-glyceraldehyde 3-phosphate: step 3/5. Its function is as follows. Catalyzes the interconversion of 2-phosphoglycerate and 3-phosphoglycerate. The chain is 2,3-bisphosphoglycerate-independent phosphoglycerate mutase from Trichodesmium erythraeum (strain IMS101).